The chain runs to 171 residues: Endoribonuclease YbeY (171 aa).

Zn(2+) is bound by residues His-115, His-119, and His-125.

This sequence belongs to the endoribonuclease YbeY family. The cofactor is Zn(2+).

It localises to the cytoplasm. Single strand-specific metallo-endoribonuclease involved in late-stage 70S ribosome quality control and in maturation of the 3' terminus of the 16S rRNA. This Tropheryma whipplei (strain TW08/27) (Whipple's bacillus) protein is Endoribonuclease YbeY.